The sequence spans 220 residues: Metalloproteinase inhibitor 2 (220 aa).

Positions 1 to 26 (MGAAARTLRLALGLLLLATLLRPADA) are cleaved as a signal peptide. Zn(2+) is bound at residue Cys-27. 2 involved in metalloproteinase-binding regions span residues 27–30 (CSCS) and 95–96 (SA). Intrachain disulfides connect Cys-27–Cys-98, Cys-29–Cys-127, Cys-39–Cys-152, Cys-154–Cys-201, Cys-159–Cys-164, and Cys-172–Cys-193. Residues 27–152 (CSCSPVHPQQ…SLNHRYQMGC (126 aa)) form the NTR domain.

It belongs to the protease inhibitor I35 (TIMP) family. In terms of assembly, interacts (via the C-terminal) with MMP2 (via the C-terminal PEX domain); the interaction inhibits the MMP2 activity. The activity of TIMP2 is dependent on the presence of disulfide bonds.

The protein localises to the secreted. Its function is as follows. Complexes with metalloproteinases (such as collagenases) and irreversibly inactivates them by binding to their catalytic zinc cofactor. Known to act on MMP-1, MMP-2, MMP-3, MMP-7, MMP-8, MMP-9, MMP-10, MMP-13, MMP-14, MMP-15, MMP-16 and MMP-19. The protein is Metalloproteinase inhibitor 2 (TIMP2) of Homo sapiens (Human).